Here is a 302-residue protein sequence, read N- to C-terminus: Ribosomal RNA small subunit methyltransferase H (302 aa).

S-adenosyl-L-methionine contacts are provided by residues 43-45 (GGH), D62, F89, D105, and H112. Positions 276–302 (EIANNPRSRSAKLRIAEKQAETGDEDN) are disordered.

The protein belongs to the methyltransferase superfamily. RsmH family.

It localises to the cytoplasm. The enzyme catalyses cytidine(1402) in 16S rRNA + S-adenosyl-L-methionine = N(4)-methylcytidine(1402) in 16S rRNA + S-adenosyl-L-homocysteine + H(+). Its function is as follows. Specifically methylates the N4 position of cytidine in position 1402 (C1402) of 16S rRNA. This is Ribosomal RNA small subunit methyltransferase H from Nostoc sp. (strain PCC 7120 / SAG 25.82 / UTEX 2576).